Here is a 323-residue protein sequence, read N- to C-terminus: Acetyl esterase (323 aa).

An Involved in the stabilization of the negatively charged intermediate by the formation of the oxyanion hole motif is present at residues 91–93; the sequence is HGG. Active-site residues include Ser-165, Asp-262, and His-292.

Belongs to the 'GDXG' lipolytic enzyme family. In terms of assembly, homodimer. Interacts with MalT and MelA.

The protein localises to the cytoplasm. Its function is as follows. Displays esterase activity towards short chain fatty esters (acyl chain length of up to 8 carbons). Able to hydrolyze triacetylglycerol (triacetin) and tributyrylglycerol (tributyrin), but not trioleylglycerol (triolein) or cholesterol oleate. Negatively regulates MalT activity by antagonizing maltotriose binding. Inhibits MelA galactosidase activity. The polypeptide is Acetyl esterase (Salmonella typhi).